A 1469-amino-acid polypeptide reads, in one-letter code: Regulation of nuclear pre-mRNA domain-containing protein 2 (1469 aa).

At A2 the chain carries N-acetylalanine. The residue at position 16 (S16) is a Phosphoserine. The CID domain maps to 19 to 149; it reads SAGALESSLD…ALREALMDRA (131 aa). Disordered regions lie at residues 329–445 and 489–524; these read STLP…TAAP and TGVS…PSHN. The span at 370–386 shows a compositional bias: basic and acidic residues; it reads ESDKSATPEPVTDNRDV. S374 carries the phosphoserine modification. The residue at position 376 (T376) is a Phosphothreonine. Acidic residues predominate over residues 387–396; that stretch reads EDMELSDVED. S392 bears the Phosphoserine mark. Over residues 397–412 the composition is skewed to basic and acidic residues; that stretch reads DGSKIIVEDRKEKPVE. Positions 419-430 are enriched in polar residues; sequence GVPTKSTESVSK. Over residues 434–445 the composition is skewed to pro residues; that stretch reads CAPPSVPTTAAP. A phosphoserine mark is found at S492, S495, S498, and S504. The residue at position 536 (T536) is a Phosphothreonine. The tract at residues 572-594 is disordered; sequence ASEVTSQSTTASPASTTGSAVKG. Low complexity predominate over residues 576 to 591; the sequence is TSQSTTASPASTTGSA. 2 positions are modified to phosphoserine: S583 and S612. T617 carries the post-translational modification Phosphothreonine. A Phosphoserine modification is found at S633. Residues 647-656 are compositionally biased toward polar residues; sequence SLGFTGTHNP. Disordered stretches follow at residues 647–686, 716–867, 919–1013, 1033–1140, 1154–1183, 1204–1328, and 1368–1414; these read SLGF…TSPS, SSAP…AMMN, SENC…SGVE, KNAS…HGRE, SSFD…FKTT, FNST…PTPP, and GPGL…HRDA. A phosphoserine mark is found at S682, S684, S735, and S738. A Phosphothreonine modification is found at T742. S749 bears the Phosphoserine mark. Position 751 is a phosphothreonine (T751). Positions 761–771 are enriched in polar residues; it reads PTSSSVDTMSL. A phosphoserine mark is found at S777 and S781. Positions 777-787 are enriched in low complexity; sequence SPGSSTPSSTR. The residue at position 782 (T782) is a Phosphothreonine. A phosphoserine mark is found at S788, S836, S845, S919, and S947. The segment covering 959–982 has biased composition (polar residues); it reads PDSNHSGLSQSTAGHLTLPQTQYP. 2 positions are modified to phosphoserine: S984 and S995. Over residues 1047-1073 the composition is skewed to polar residues; that stretch reads QTPNKGTSSDGVSLSNLTQPSLPTTDQ. Phosphoserine occurs at positions 1086 and 1117. Residues 1159 to 1168 are compositionally biased toward low complexity; the sequence is GPSSASELAS. Residues 1169–1178 show a composition bias toward gly residues; that stretch reads LGGGGSGGLT. Over residues 1272 to 1295 the composition is skewed to pro residues; that stretch reads GPPPPPGEHSGVPFPPPPPPPPPG. R1375 carries the asymmetric dimethylarginine modification. 2 stretches are compositionally biased toward low complexity: residues 1377-1390 and 1400-1409; these read SLSL…HLGP and TSSSGLPLSP. R1432 and R1438 each carry asymmetric dimethylarginine.

Associates with the RNA polymerase II complex.

The sequence is that of Regulation of nuclear pre-mRNA domain-containing protein 2 (Rprd2) from Mus musculus (Mouse).